Here is a 778-residue protein sequence, read N- to C-terminus: Preaspterpenacid I synthase sttA (778 aa).

Residues 4 to 359 (ISDVMKHCVP…RYHRTDLATT (356 aa)) are sesterterpenoid synthase. Mg(2+) is bound at residue Asp-105. Residue Asp-105 coordinates substrate. Residues 211-214 (RVNE) form a substrate region. Position 255 (Asn-255) interacts with substrate. 2 substrate regions span residues 259 to 263 (SFPKE) and 350 to 351 (RY). Residues 360 to 774 (AEDRATLIGK…RMMLLGMGPK (415 aa)) form a geranylfarneyl diphosphate synthase region. Positions 423-445 (AFKKSNPRNGKQNGTEGSKGTFT) are disordered. The segment covering 429–445 (PRNGKQNGTEGSKGTFT) has biased composition (polar residues). Isopentenyl diphosphate contacts are provided by Lys-493, Arg-496, and His-525. Asp-532 and Asp-536 together coordinate Mg(2+). Arg-541 contacts dimethylallyl diphosphate. Arg-542 is a binding site for isopentenyl diphosphate. Positions 619, 620, 657, 664, and 674 each coordinate dimethylallyl diphosphate.

It in the N-terminal section; belongs to the terpene synthase family. The protein in the C-terminal section; belongs to the FPP/GGPP synthase family.

The catalysed reaction is 4 isopentenyl diphosphate + dimethylallyl diphosphate = (2E,6E,10E,14E)-geranylfarnesyl diphosphate + 4 diphosphate. It catalyses the reaction (2E,6E,10E,14E)-geranylfarnesyl diphosphate + H2O = preaspterpenacid acid I + diphosphate. It participates in secondary metabolite biosynthesis; terpenoid biosynthesis. In terms of biological role, sesterterpenoid synthase; part of the gene cluster that mediates the biosynthesis of aspterpenacids. Performs both prenyl transferase and terpene cyclase activity, converting isopentenyl diphosphate and dimethylallyl diphosphate into geranylfarnesyl diphosphate (GFPP) and then converting GFPP into preaspterpenacid I. C22-oxidative modification of preaspterpenacid I by the cytochrome P450 monooxygenase sttB then leads to preaspterpenacid II. It has still to be determined how preaspterpenacid II is further modified to produce aspterpenacids. This is Preaspterpenacid I synthase sttA from Aspergillus terreus.